The following is a 315-amino-acid chain: MIEIEKVCVDFTAGRGTSGAGKSTLLRTLNALTRPSQGRVNVNGVEISALDGKALRQARQRIGMIFQHFNLMHTRTVAQNVAFSLKAAGWERSKIAPRVAEILTLVGLADKANRFPVQLSGGQKQRVGIARAIANHPDVLLCDEPTSALDLETSATILALLRQINAQLGITIVLITHEMNVIKSICDRVAVMSGGKVVESGEVFDEFAHPQHAFTQQLVSHTLNLTLPERLREHLPGQLLKILFIGDSAEQPVLSEVAIKFGVAVNILHGKIEYIGERALGILVVQLTAPHNPTAVAAAVEHIRQRTAQVEVIRG.

The region spanning 2 to 219 (IEIEKVCVDF…PQHAFTQQLV (218 aa)) is the ABC transporter domain. ATP is bound at residue 16–23 (GTSGAGKS).

The protein belongs to the ABC transporter superfamily. Methionine importer (TC 3.A.1.24) family. In terms of assembly, the complex is composed of two ATP-binding proteins (MetN), two transmembrane proteins (MetI) and a solute-binding protein (MetQ).

The protein localises to the cell inner membrane. The enzyme catalyses L-methionine(out) + ATP + H2O = L-methionine(in) + ADP + phosphate + H(+). It carries out the reaction D-methionine(out) + ATP + H2O = D-methionine(in) + ADP + phosphate + H(+). Functionally, part of the ABC transporter complex MetNIQ involved in methionine import. Responsible for energy coupling to the transport system. This Salmonella enteritidis protein is Methionine import ATP-binding protein MetN.